Reading from the N-terminus, the 86-residue chain is Progonadoliberin IIA (86 aa).

The N-terminal stretch at M1–S24 is a signal peptide. Q25 is modified (pyrrolidone carboxylic acid). At G34 the chain carries Glycine amide.

This sequence belongs to the GnRH family. In terms of tissue distribution, olfactory bulbs, hypothalamus and telencephalon, midbrain and posterior brain areas.

It localises to the secreted. Functionally, stimulates the secretion of gonadotropins. The protein is Progonadoliberin IIA (gnrh2a) of Carassius auratus (Goldfish).